We begin with the raw amino-acid sequence, 473 residues long: Arginine biosynthesis bifunctional protein ArgJ, mitochondrial (473 aa).

Positions 201, 230, 241, 328, 468, and 473 each coordinate substrate. Thr241 functions as the Nucleophile in the catalytic mechanism.

Belongs to the ArgJ family. As to quaternary structure, heterodimer of an alpha and a beta chain. The alpha and beta chains are autoproteolytically processed from a single precursor protein within the mitochondrion.

It is found in the mitochondrion matrix. It carries out the reaction N(2)-acetyl-L-ornithine + L-glutamate = N-acetyl-L-glutamate + L-ornithine. It catalyses the reaction L-glutamate + acetyl-CoA = N-acetyl-L-glutamate + CoA + H(+). It participates in amino-acid biosynthesis; L-arginine biosynthesis; L-ornithine and N-acetyl-L-glutamate from L-glutamate and N(2)-acetyl-L-ornithine (cyclic): step 1/1. Its pathway is amino-acid biosynthesis; L-arginine biosynthesis; N(2)-acetyl-L-ornithine from L-glutamate: step 1/4. Its function is as follows. Catalyzes two activities which are involved in the cyclic version of arginine biosynthesis: the synthesis of acetylglutamate from glutamate and acetyl-CoA, and of ornithine by transacetylation between acetylornithine and glutamate. The polypeptide is Arginine biosynthesis bifunctional protein ArgJ, mitochondrial (Paracoccidioides lutzii (strain ATCC MYA-826 / Pb01) (Paracoccidioides brasiliensis)).